The sequence spans 344 residues: Gibberellin receptor GID1C (344 aa).

Ala-2 carries the post-translational modification N-acetylalanine. The Involved in the stabilization of the negatively charged intermediate by the formation of the oxyanion hole motif lies at His-111–Gly-113. Gibberellin A4-binding positions include Gly-113–Ser-114, Tyr-125, and Ser-189. Gibberellin A3-binding residues include Ser-114, Tyr-125, Ser-189, and Phe-236. Ser-189 is an active-site residue. Asp-287 is an active-site residue. Position 318 (Gly-318) interacts with gibberellin A4. Gibberellin A3 is bound at residue Gly-318.

Belongs to the 'GDXG' lipolytic enzyme family. In terms of assembly, interacts with the DELLA proteins GAI, RGA, RGL1, RGL2 and RGL3 in a GA-dependent manner. Widely expressed.

The protein localises to the nucleus. In terms of biological role, functions as a soluble gibberellin (GA) receptor. GA is an essential hormone that regulates growth and development in plants. Binds with high affinity the biologically active gibberellin GA4, but has no affinity for the biologically inactive GAs. In response to GA, interacts with specific DELLA proteins, known as repressors of GA-induced growth, and targets them for degradation via proteasome. Seems to be required for GA signaling that controls root growth, seed germination and stem elongation. Partially redundant with GID1A and GID1B. This Arabidopsis thaliana (Mouse-ear cress) protein is Gibberellin receptor GID1C (GID1C).